The primary structure comprises 461 residues: Dihydrolipoyl dehydrogenase (461 aa).

FAD-binding positions include 34-42 (EEDQAGGTC), Lys51, and Gly114. Cys42 and Cys47 are disulfide-bonded. NAD(+) is bound by residues 177-181 (GGGVI), Glu200, and 261-264 (AIGR). 2 residues coordinate FAD: Asp304 and Ala312. His436 functions as the Proton acceptor in the catalytic mechanism.

The protein belongs to the class-I pyridine nucleotide-disulfide oxidoreductase family. It depends on FAD as a cofactor.

The protein localises to the cytoplasm. It carries out the reaction N(6)-[(R)-dihydrolipoyl]-L-lysyl-[protein] + NAD(+) = N(6)-[(R)-lipoyl]-L-lysyl-[protein] + NADH + H(+). Functionally, the branched-chain alpha-keto dehydrogenase complex catalyzes the overall conversion of alpha-keto acids to acyl-CoA and CO(2). It contains multiple copies of 3 enzymatic components: branched-chain alpha-keto acid decarboxylase (E1), lipoamide acyltransferase (E2) and lipoamide dehydrogenase (E3). The sequence is that of Dihydrolipoyl dehydrogenase (lpdA) from Chlamydia pneumoniae (Chlamydophila pneumoniae).